We begin with the raw amino-acid sequence, 385 residues long: Deoxyguanosinetriphosphate triphosphohydrolase-like protein (385 aa).

Residues 75-204 (RLTHSLEVAQ…INFADEIAYN (130 aa)) enclose the HD domain.

This sequence belongs to the dGTPase family. Type 2 subfamily.

The protein is Deoxyguanosinetriphosphate triphosphohydrolase-like protein of Geobacter sulfurreducens (strain ATCC 51573 / DSM 12127 / PCA).